We begin with the raw amino-acid sequence, 436 residues long: Glutamate-1-semialdehyde 2,1-aminomutase (436 aa).

Residue Lys-276 is modified to N6-(pyridoxal phosphate)lysine.

It belongs to the class-III pyridoxal-phosphate-dependent aminotransferase family. HemL subfamily. Homodimer. It depends on pyridoxal 5'-phosphate as a cofactor.

The protein localises to the cytoplasm. It catalyses the reaction (S)-4-amino-5-oxopentanoate = 5-aminolevulinate. It participates in porphyrin-containing compound metabolism; protoporphyrin-IX biosynthesis; 5-aminolevulinate from L-glutamyl-tRNA(Glu): step 2/2. It functions in the pathway porphyrin-containing compound metabolism; chlorophyll biosynthesis. In Synechococcus sp. (strain JA-2-3B'a(2-13)) (Cyanobacteria bacterium Yellowstone B-Prime), this protein is Glutamate-1-semialdehyde 2,1-aminomutase.